The chain runs to 543 residues: Probable zinc transporter protein DDB_G0283629 (543 aa).

Residues 1-175 are disordered; the sequence is MENFKNNELE…EESKPLNQLR (175 aa). The Cytoplasmic portion of the chain corresponds to 1-186; that stretch reads MENFKNNELE…LDSKKKARYS (186 aa). Composition is skewed to low complexity over residues 11 to 26 and 41 to 55; these read SSPIINKNNSSHSINN and NNNNDNNNTITNSHI. Basic and acidic residues-rich tracts occupy residues 56–66 and 76–104; these read NNHDHKHNHEH and HNHDHDHNHEEEYGHGNELEHNNDQEHNV. Residues 105 to 116 are compositionally biased toward low complexity; it reads GNKNLLTNNNNQ. Over residues 130-140 the composition is skewed to gly residues; that stretch reads EDGSSSGGGGG. The helical transmembrane segment at 187–207 threads the bilayer; the sequence is LILALTLTTIFMVGEIVGGYF. Over 208-216 the chain is Extracellular; the sequence is ANSLAIMTD. The helical transmembrane segment at 217–237 threads the bilayer; sequence AAHLLTDIGAMFLSLFAMWIS. The Cytoplasmic portion of the chain corresponds to 238 to 251; that stretch reads QHPPTSSMSFGFHR. A helical transmembrane segment spans residues 252-272; sequence AEILGALVSVLMIWALTGVLV. Residues 273 to 289 are Extracellular-facing; the sequence is YEAIQRILYPPDAVDGK. The chain crosses the membrane as a helical span at residues 290 to 310; it reads IMFIIASCGLFINIIDAIILH. The Cytoplasmic segment spans residues 311 to 375; the sequence is WGSGGHGHSH…VRNINVHSAY (65 aa). Residues 319–342 are disordered; it reads SHGGGHGHSHGIGGGTQKKKSKKN. The helical transmembrane segment at 376 to 396 threads the bilayer; it reads IHVLGDCFQSIGVMVASCIIW. Over 397 to 402 the chain is Extracellular; the sequence is VHPHWK. Residues 403–423 traverse the membrane as a helical segment; it reads IADPITTLIFSVIVLGTTIKL. Topologically, residues 424–543 are cytoplasmic; it reads LRESLGVLME…NDNLSSPPNQ (120 aa). A disordered region spans residues 516–543; it reads KCKDHSCPPPKPKKKKIKNDNLSSPPNQ.

This sequence belongs to the cation diffusion facilitator (CDF) transporter (TC 2.A.4) family. SLC30A subfamily.

It is found in the membrane. In terms of biological role, may be involved in zinc transport from the cytoplasm to either intracellular organelles or extracellular spaces. In Dictyostelium discoideum (Social amoeba), this protein is Probable zinc transporter protein DDB_G0283629.